Here is a 154-residue protein sequence, read N- to C-terminus: 3-hydroxyacyl-[acyl-carrier-protein] dehydratase FabZ (154 aa).

His-54 is a catalytic residue.

This sequence belongs to the thioester dehydratase family. FabZ subfamily.

Its subcellular location is the cytoplasm. The enzyme catalyses a (3R)-hydroxyacyl-[ACP] = a (2E)-enoyl-[ACP] + H2O. In terms of biological role, involved in unsaturated fatty acids biosynthesis. Catalyzes the dehydration of short chain beta-hydroxyacyl-ACPs and long chain saturated and unsaturated beta-hydroxyacyl-ACPs. The polypeptide is 3-hydroxyacyl-[acyl-carrier-protein] dehydratase FabZ (Shewanella putrefaciens (strain CN-32 / ATCC BAA-453)).